A 527-amino-acid polypeptide reads, in one-letter code: Putative BTB/POZ domain and WD-repeat protein R783 (527 aa).

One can recognise a BTB domain in the interval 45–115; that stretch reads TDVTIVLDDG…FYSQNTDTRN (71 aa). WD repeat units follow at residues 215-266, 272-310, 313-353, 355-391, and 436-476; these read IHGD…VEAS, NVKT…LIKT, KHKN…IVRC, ISPV…FLFK, and YCPS…DNKY.

It belongs to the mimivirus BTB/WD family.

This is Putative BTB/POZ domain and WD-repeat protein R783 from Acanthamoeba polyphaga (Amoeba).